We begin with the raw amino-acid sequence, 401 residues long: Adenosine 3'-phospho 5'-phosphosulfate transporter 2 (401 aa).

2 N-linked (GlcNAc...) asparagine glycosylation sites follow: N12 and N71. A run of 6 helical transmembrane segments spans residues 78-98 (LTQFFICVAGVFVFYLIYGYL), 111-131 (YGWYLTLVQFAFYSIFGLIEL), 147-167 (MIIAFLTVGTMGLSNTSLGYL), 170-190 (PTQVIFKCCKLIPVMLGGVFI), 200-220 (VSAAICMSLGLIWFTLADSTI), and 223-243 (NFNLTGVVLISLALCADAVIG). N-linked (GlcNAc...) asparagine glycosylation is present at N254. 4 consecutive transmembrane segments (helical) span residues 267–287 (IGFVYILLGLTCTSGLGPAVT), 298–317 (GYAFLFSLTGYFGISFVLAL), 324–346 (LIAVTVTTGRKAMTIVLSFIFFA), and 349–369 (FTFQYVWSGLLVFLGIFLNVY).

This sequence belongs to the nucleotide-sugar transporter family. SLC35B subfamily.

It localises to the golgi apparatus membrane. It catalyses the reaction 3'-phosphoadenylyl sulfate(in) + adenosine 3',5'-bisphosphate(out) = 3'-phosphoadenylyl sulfate(out) + adenosine 3',5'-bisphosphate(in). In terms of biological role, probably functions as a 3'-phosphoadenylyl sulfate:adenosine 3',5'-bisphosphate antiporter at the Golgi membranes. Mediates the transport from the cytosol into the lumen of the Golgi of 3'-phosphoadenylyl sulfate/adenosine 3'-phospho 5'-phosphosulfate (PAPS), a universal sulfuryl donor for sulfation events that take place in that compartment. The sequence is that of Adenosine 3'-phospho 5'-phosphosulfate transporter 2 from Pongo abelii (Sumatran orangutan).